Reading from the N-terminus, the 391-residue chain is MAQNNSDGVEGASPAKRRRLDQVTYSEICADFRSGSFSDFFMEKYNFAQVASYKMQPDDDWTDMIAQHAKIELDPTKEYVILSTVFIQSNCYIIGHGAKIVIVGEPGIAFKVLTKSFGPVITNMWAVSFTDCVFQRRDSYNGKVFTCASQVLFHNCFFVGFTGTCITSTAALTVRGCQFLACYRPIMFLAAFDLTVKHCVFDKCVIAISTEGDFEISSNLCTDSCCFLSAAGTGIFSYNSIVNPFTLQDSAEFSMVTCADAKVQLLHTIHIHSNPKLVYPQFMHNVLLRAKLFVGRRRGGFHPHFCSLKYSLLTLAKGSERKVNLSTCYPDGLKVYKVLNRNPNRLFTRLCECDASHQTADIVLGEVGLPATADPTLDSVDCLEFSSDEEW.

Ser-387 bears the Phosphoserine mark.

This sequence belongs to the adenoviridae E1B 55 kDa protein family. Interacts with host PML-4 and PML-5; this interaction promotes efficient subnuclear targeting of E1B-55K to PML nuclear bodies. Interacts with E4-ORF3 protein. Interacts with E4-ORF6 protein.

Its subcellular location is the host nucleus. It localises to the host cytoplasm. Plays a major role to prevent cellular inhibition of viral genome replication. Assembles an SCF-like E3 ubiquitin ligase complex based on the cellular proteins ELOB, ELOC, CUL5 and RBX1, in cooperation with viral E4orf6. This viral RING-type ligase ubiquitinates cellular substrates and targets them to proteasomal degradation: TP53/p53, LIG4, MRE11-RAD50-NBS1 (MRN) complex, ITGA3, DAXX and BLM. E1B-55K probably acts as the substrate-specific adapter of the SCF-like E3 ubiquitin ligase complex. Degradation of host TP53/p53 activity is essential for preventing E1A-induced TP53 accumulation that would otherwise lead to cell apoptosis and growth arrest. E1B-55K also inactivates TP53 transcription-factor activity by binding its transactivation domain. E1B-55K also functions as a SUMO1 E3 ligase for TP53 which causes the latter to be sequestered in promyelocytic leukemia (PML) nuclear bodies thereby contributing to maximal inhibition of TP53 function. The sequence is that of E1B 55 kDa protein from Tree shrew adenovirus serotype 1 (TSAdV-1).